The primary structure comprises 408 residues: UPF0761 membrane protein azo3165 (408 aa).

The next 7 helical transmembrane spans lie at 29–49 (LAFTTLLALVPLLTVAIGVFG), 92–112 (LTLIGTAMLAVTALMLLATIE), 131–151 (ITVSWFMLTLGPVILGGSVVA), 172–192 (IAAATLPPLLLGALFSFLYYA), 197–217 (PVRLLHALAGGLCAALVFLLM), 220–240 (GLGLFIAGFPTYTLIYGTFAA), and 241–261 (LPIFLLWLYLSWTVILLGALI).

It belongs to the UPF0761 family.

The protein localises to the cell inner membrane. In Azoarcus sp. (strain BH72), this protein is UPF0761 membrane protein azo3165.